The sequence spans 297 residues: Nucleotide-binding protein DSY4845 (297 aa).

An ATP-binding site is contributed by 13-20; that stretch reads GLSGAGKT. GTP is bound at residue 64–67; sequence DLRG.

The protein belongs to the RapZ-like family.

In terms of biological role, displays ATPase and GTPase activities. The chain is Nucleotide-binding protein DSY4845 from Desulfitobacterium hafniense (strain Y51).